A 637-amino-acid chain; its full sequence is Biosynthetic arginine decarboxylase (637 aa).

Position 101 is an N6-(pyridoxal phosphate)lysine (Lys101). Substrate is bound at residue 286-296 (VDIGGGLGVDY).

It belongs to the Orn/Lys/Arg decarboxylase class-II family. SpeA subfamily. Requires Mg(2+) as cofactor. Pyridoxal 5'-phosphate serves as cofactor.

The catalysed reaction is L-arginine + H(+) = agmatine + CO2. It participates in amine and polyamine biosynthesis; agmatine biosynthesis; agmatine from L-arginine: step 1/1. Its function is as follows. Catalyzes the biosynthesis of agmatine from arginine. The polypeptide is Biosynthetic arginine decarboxylase (Marinobacter nauticus (strain ATCC 700491 / DSM 11845 / VT8) (Marinobacter aquaeolei)).